The primary structure comprises 159 residues: Small ribosomal subunit protein uS9 (159 aa).

The protein belongs to the universal ribosomal protein uS9 family.

This chain is Small ribosomal subunit protein uS9, found in Rickettsia rickettsii (strain Iowa).